A 701-amino-acid chain; its full sequence is Putative pentatricopeptide repeat-containing protein At3g25970 (701 aa).

16 PPR repeats span residues Asp-34–Arg-64, Asp-65–Val-99, Asp-100–Cys-134, Asn-135–Pro-165, Asn-166–Thr-200, Asp-202–His-236, Glu-237–Ser-267, Asp-269–Thr-303, Asp-304–Gln-338, Val-339–Lys-371, Asp-372–Val-406, Asp-407–Ser-441, Asn-442–Lys-472, Ser-474–Leu-508, Asp-509–Val-539, and Arg-545–Asn-575. Residues Val-580–Arg-655 are type E motif. The tract at residues Asn-656 to Gln-686 is type E(+) motif.

It belongs to the PPR family. PCMP-E subfamily.

In Arabidopsis thaliana (Mouse-ear cress), this protein is Putative pentatricopeptide repeat-containing protein At3g25970 (PCMP-E46).